The following is a 207-amino-acid chain: LexA repressor (207 aa).

Residues 28–48 (VREIGEAVGLASSSTVHGHLS) constitute a DNA-binding region (H-T-H motif). Catalysis depends on for autocatalytic cleavage activity residues S130 and K168.

It belongs to the peptidase S24 family. In terms of assembly, homodimer.

The enzyme catalyses Hydrolysis of Ala-|-Gly bond in repressor LexA.. In terms of biological role, represses a number of genes involved in the response to DNA damage (SOS response), including recA and lexA. In the presence of single-stranded DNA, RecA interacts with LexA causing an autocatalytic cleavage which disrupts the DNA-binding part of LexA, leading to derepression of the SOS regulon and eventually DNA repair. The polypeptide is LexA repressor (Staphylococcus haemolyticus (strain JCSC1435)).